A 116-amino-acid chain; its full sequence is Large ribosomal subunit protein bL20 (116 aa).

Belongs to the bacterial ribosomal protein bL20 family.

In terms of biological role, binds directly to 23S ribosomal RNA and is necessary for the in vitro assembly process of the 50S ribosomal subunit. It is not involved in the protein synthesizing functions of that subunit. The chain is Large ribosomal subunit protein bL20 from Mycoplasmopsis pulmonis (strain UAB CTIP) (Mycoplasma pulmonis).